Consider the following 650-residue polypeptide: Protein kinase domain-containing protein ppk38 (650 aa).

Positions 33–315 (VTVKRYLAEG…MRNVPIHIYD (283 aa)) constitute a Protein kinase domain. Disordered regions lie at residues 344–442 (IHQS…PTTP), 517–571 (KVAA…PTNM), and 591–616 (RRVS…EKPM). 2 stretches are compositionally biased toward polar residues: residues 369-415 (NVNS…NFRV) and 533-554 (SVEN…SSNA).

The sequence is that of Protein kinase domain-containing protein ppk38 (ppk38) from Schizosaccharomyces pombe (strain 972 / ATCC 24843) (Fission yeast).